A 397-amino-acid polypeptide reads, in one-letter code: Digeranylgeranylglycerophospholipid reductase 1 (397 aa).

Positions 18, 37, 48, 49, 51, 104, 128, 284, 296, and 297 each coordinate FAD.

This sequence belongs to the geranylgeranyl reductase family. DGGGPL reductase subfamily. FAD serves as cofactor.

It catalyses the reaction a 2,3-bis-O-phytanyl-sn-glycerol 1-phospholipid + 8 A = a 2,3-bis-O-(geranylgeranyl)-sn-glycerol 1-phospholipid + 8 AH2. The enzyme catalyses 2,3-bis-O-(phytanyl)-sn-glycerol 1-phosphate + 8 A = 2,3-bis-O-(geranylgeranyl)-sn-glycerol 1-phosphate + 8 AH2. The catalysed reaction is CDP-2,3-bis-O-(geranylgeranyl)-sn-glycerol + 8 AH2 = CDP-2,3-bis-O-(phytanyl)-sn-glycerol + 8 A. It carries out the reaction archaetidylserine + 8 AH2 = 2,3-bis-O-phytanyl-sn-glycero-3-phospho-L-serine + 8 A. The protein operates within membrane lipid metabolism; glycerophospholipid metabolism. Its function is as follows. Is involved in the reduction of 2,3-digeranylgeranylglycerophospholipids (unsaturated archaeols) into 2,3-diphytanylglycerophospholipids (saturated archaeols) in the biosynthesis of archaeal membrane lipids. Catalyzes the formation of archaetidic acid (2,3-di-O-phytanyl-sn-glyceryl phosphate) from 2,3-di-O-geranylgeranylglyceryl phosphate (DGGGP) via the hydrogenation of each double bond of the isoprenoid chains. Is also probably able to reduce double bonds of geranyl groups in CDP-2,3-bis-O-(geranylgeranyl)-sn-glycerol and archaetidylserine, thus acting at various stages in the biosynthesis of archaeal membrane lipids. The polypeptide is Digeranylgeranylglycerophospholipid reductase 1 (Methanothermobacter thermautotrophicus (strain ATCC 29096 / DSM 1053 / JCM 10044 / NBRC 100330 / Delta H) (Methanobacterium thermoautotrophicum)).